Consider the following 132-residue polypeptide: Large ribosomal subunit protein bL12 (132 aa).

The protein belongs to the bacterial ribosomal protein bL12 family. As to quaternary structure, homodimer. Part of the ribosomal stalk of the 50S ribosomal subunit. Forms a multimeric L10(L12)X complex, where L10 forms an elongated spine to which 2 to 4 L12 dimers bind in a sequential fashion. Binds GTP-bound translation factors.

Forms part of the ribosomal stalk which helps the ribosome interact with GTP-bound translation factors. Is thus essential for accurate translation. This is Large ribosomal subunit protein bL12 from Ehrlichia canis (strain Jake).